A 200-amino-acid polypeptide reads, in one-letter code: Putative 3-methyladenine DNA glycosylase (200 aa).

It belongs to the DNA glycosylase MPG family.

The sequence is that of Putative 3-methyladenine DNA glycosylase from Methanocella arvoryzae (strain DSM 22066 / NBRC 105507 / MRE50).